Consider the following 314-residue polypeptide: Peroxisome biogenesis factor 10 (314 aa).

At 1 to 7 (MNTYVAE) the chain is on the peroxisomal matrix side. Residues 8–37 (IGEIVRSQRRDEEYIEDITERLSRVSKELL) traverse the membrane as a helical segment. Gly38 is a topological domain (cytoplasmic). The helical transmembrane segment at 39–60 (QRTWIRWFPYLKSIASTLYYTS) threads the bilayer. Residues 61 to 90 (TVVLGNQTLGEEYVHLFESNGLERTVPSIP) are Peroxisomal matrix-facing. A helical transmembrane segment spans residues 91–110 (SRISFVLLHSAFPLISNYLI). The Cytoplasmic portion of the chain corresponds to 111–142 (QKAESTLTHPSTESFLGIPIRKNQKARQSFLD). Residues 143–166 (VFFWLRTKLFPQLQRAHIALFYIT) traverse the membrane as a helical segment. Topologically, residues 167 to 197 (GAYYSIARRFTGIRFLSASAHSDIPALKVYR) are peroxisomal matrix. A helical transmembrane segment spans residues 198-218 (FLGYITLIQLAVSIGISLYSF). The Cytoplasmic portion of the chain corresponds to 219-314 (LEQEKFNNKL…PRDVTPLLNL (96 aa)). The Zn(2+) site is built by Cys255, Cys258, Cys269, His271, Cys274, Cys277, Cys296, and Cys299. Residues 255–300 (CSICLENKNPSALFCGHLFCWTCIQEHAVAATSSASTSSARCPQCR) form an RING-type zinc finger.

Belongs to the pex2/pex10/pex12 family. Component of the PEX2-PEX10-PEX12 retrotranslocation channel.

It is found in the peroxisome membrane. The catalysed reaction is S-ubiquitinyl-[E2 ubiquitin-conjugating enzyme]-L-cysteine + [acceptor protein]-L-lysine = [E2 ubiquitin-conjugating enzyme]-L-cysteine + N(6)-ubiquitinyl-[acceptor protein]-L-lysine.. Its pathway is protein modification; protein ubiquitination. The E3 ubiquitin-protein ligase activity is stimulated by PEX12/prx-12. Functionally, E3 ubiquitin-protein ligase component of a retrotranslocation channel required for peroxisome organization by mediating export of the PEX5/prx-5 receptor from peroxisomes to the cytosol, thereby promoting PEX5/prx-5 recycling. The retrotranslocation channel is composed of PEX2/prx-2, PEX10/prx-10 and PEX12/prx-12; each subunit contributing transmembrane segments that coassemble into an open channel that specifically allows the passage of PEX5/prx-5 through the peroxisomal membrane. PEX10/prx-10 also regulates PEX5 recycling by acting as a E3 ubiquitin-protein ligase. When PEX5/prx-5 recycling is compromised, PEX10/prx-10 catalyzes polyubiquitination of PEX5/prx-5 during its passage through the retrotranslocation channel, leading to its degradation. This chain is Peroxisome biogenesis factor 10, found in Caenorhabditis elegans.